A 165-amino-acid chain; its full sequence is Transcription elongation factor GreA (165 aa).

A coiled-coil region spans residues 55-78 (AAKEEQGKQELRVRQLTQLLENAK).

Belongs to the GreA/GreB family.

Its function is as follows. Necessary for efficient RNA polymerase transcription elongation past template-encoded arresting sites. The arresting sites in DNA have the property of trapping a certain fraction of elongating RNA polymerases that pass through, resulting in locked ternary complexes. Cleavage of the nascent transcript by cleavage factors such as GreA or GreB allows the resumption of elongation from the new 3'terminus. GreA releases sequences of 2 to 3 nucleotides. The protein is Transcription elongation factor GreA of Streptomyces avermitilis (strain ATCC 31267 / DSM 46492 / JCM 5070 / NBRC 14893 / NCIMB 12804 / NRRL 8165 / MA-4680).